A 1200-amino-acid chain; its full sequence is Ice nucleation protein (1200 aa).

Residues 176 to 1151 are octapeptide periodicity; the sequence is ATYGSTLSGD…LSAGEDSILI (976 aa).

Belongs to the bacterial ice nucleation protein family.

The protein localises to the cell outer membrane. Ice nucleation proteins enable bacteria to nucleate crystallization in supercooled water. The sequence is that of Ice nucleation protein (inaZ) from Pseudomonas syringae pv. syringae.